We begin with the raw amino-acid sequence, 173 residues long: Alpha-crystallin B chain (173 aa).

Met-1 bears the N-acetylmethionine mark. The 109-residue stretch at 54–162 (RLPSWIESGL…PERSIPITRE (109 aa)) folds into the sHSP domain. Zn(2+) contacts are provided by His-81, His-102, Glu-104, and His-109.

The protein belongs to the small heat shock protein (HSP20) family. Heteromer composed of three CRYAA and one CRYAB subunits. Aggregates with homologous proteins, including the small heat shock protein HSPB1, to form large heteromeric complexes. Inter-subunit bridging via zinc ions enhances stability, which is crucial as there is no protein turn over in the lens.

In terms of biological role, may contribute to the transparency and refractive index of the lens. The sequence is that of Alpha-crystallin B chain (CRYAB) from Aquarana catesbeiana (American bullfrog).